Reading from the N-terminus, the 670-residue chain is DNA ligase (670 aa).

NAD(+) is bound by residues 34–38 (DAEYD), 83–84 (SL), and Glu-117. The active-site N6-AMP-lysine intermediate is Lys-119. 4 residues coordinate NAD(+): Arg-140, Glu-177, Lys-293, and Lys-317. Zn(2+)-binding residues include Cys-411, Cys-414, Cys-429, and Cys-434. The region spanning 591-670 (KVGGRFTGKT…DEFLAMLEEG (80 aa)) is the BRCT domain.

The protein belongs to the NAD-dependent DNA ligase family. LigA subfamily. Mg(2+) serves as cofactor. Requires Mn(2+) as cofactor.

The catalysed reaction is NAD(+) + (deoxyribonucleotide)n-3'-hydroxyl + 5'-phospho-(deoxyribonucleotide)m = (deoxyribonucleotide)n+m + AMP + beta-nicotinamide D-nucleotide.. Functionally, DNA ligase that catalyzes the formation of phosphodiester linkages between 5'-phosphoryl and 3'-hydroxyl groups in double-stranded DNA using NAD as a coenzyme and as the energy source for the reaction. It is essential for DNA replication and repair of damaged DNA. The chain is DNA ligase from Geobacter sulfurreducens (strain ATCC 51573 / DSM 12127 / PCA).